Here is a 346-residue protein sequence, read N- to C-terminus: 4-hydroxy-2-oxovalerate aldolase 2 (346 aa).

In terms of domain architecture, Pyruvate carboxyltransferase spans 8–258 (VTLVDTTLRD…HTGVELFPLI (251 aa)). Substrate-binding positions include 16–17 (RD), Ser170, and His197. Asp17 serves as a coordination point for Mn(2+). Positions 197 and 199 each coordinate Mn(2+). Position 288 (Tyr288) interacts with substrate.

The protein belongs to the 4-hydroxy-2-oxovalerate aldolase family.

The catalysed reaction is (S)-4-hydroxy-2-oxopentanoate = acetaldehyde + pyruvate. In Nocardia farcinica (strain IFM 10152), this protein is 4-hydroxy-2-oxovalerate aldolase 2.